An 84-amino-acid polypeptide reads, in one-letter code: uncharacterized protein (84 aa).

This sequence to M.jannaschii MJ1121.

This is an uncharacterized protein from Archaeoglobus fulgidus (strain ATCC 49558 / DSM 4304 / JCM 9628 / NBRC 100126 / VC-16).